The following is a 443-amino-acid chain: Tol-Pal system protein TolB (443 aa).

A signal peptide spans 1–33 (MKIGIINTKIRTVFSAFACMIAASLVCTMPARA).

Belongs to the TolB family. In terms of assembly, the Tol-Pal system is composed of five core proteins: the inner membrane proteins TolA, TolQ and TolR, the periplasmic protein TolB and the outer membrane protein Pal. They form a network linking the inner and outer membranes and the peptidoglycan layer.

The protein localises to the periplasm. Its function is as follows. Part of the Tol-Pal system, which plays a role in outer membrane invagination during cell division and is important for maintaining outer membrane integrity. This is Tol-Pal system protein TolB from Brucella suis biovar 1 (strain 1330).